The sequence spans 119 residues: Ribosome-binding factor A (119 aa).

It belongs to the RbfA family. As to quaternary structure, monomer. Binds 30S ribosomal subunits, but not 50S ribosomal subunits or 70S ribosomes.

The protein resides in the cytoplasm. In terms of biological role, one of several proteins that assist in the late maturation steps of the functional core of the 30S ribosomal subunit. Associates with free 30S ribosomal subunits (but not with 30S subunits that are part of 70S ribosomes or polysomes). Required for efficient processing of 16S rRNA. May interact with the 5'-terminal helix region of 16S rRNA. The sequence is that of Ribosome-binding factor A from Coxiella burnetii (strain CbuK_Q154) (Coxiella burnetii (strain Q154)).